A 341-amino-acid polypeptide reads, in one-letter code: uncharacterized protein (341 aa).

It belongs to the Gfo/Idh/MocA family.

This is an uncharacterized protein from Bacillus subtilis (strain 168).